Consider the following 817-residue polypeptide: Transcription factor yanR (817 aa).

The zn(2)-C6 fungal-type DNA-binding region spans 19–46 (CIVCRRRKVRCGREHPECANCVRMKENC). 3 disordered regions span residues 102–161 (GNVL…PQVD), 180–218 (HHASSRAGTSRTSSVSQDASPAVSESARAPSTSTSYSGL), and 733–775 (SLSS…VADS). Pro residues predominate over residues 113–127 (LPRPTISPASAPPPQ). A compositionally biased stretch (polar residues) spans 146 to 158 (SSTILTPAPSSHP). Residues 184 to 195 (SRAGTSRTSSVS) are compositionally biased toward low complexity. Polar residues-rich tracts occupy residues 208-217 (APSTSTSYSG) and 748-760 (EAPSTTTAPQMPS).

The protein resides in the nucleus. Transcription factor that regulates the expression of the gene cluster that mediates the biosynthesis of yanuthone D, a fungal isoprenoid epoxycyclohexenone that acts as an antibiotic against fungi and bacteria. The chain is Transcription factor yanR from Aspergillus niger (strain ATCC 1015 / CBS 113.46 / FGSC A1144 / LSHB Ac4 / NCTC 3858a / NRRL 328 / USDA 3528.7).